A 513-amino-acid polypeptide reads, in one-letter code: ATP synthase subunit alpha (513 aa).

ATP is bound at residue 169–176 (GDRQCGKT).

The protein belongs to the ATPase alpha/beta chains family. F-type ATPases have 2 components, CF(1) - the catalytic core - and CF(0) - the membrane proton channel. CF(1) has five subunits: alpha(3), beta(3), gamma(1), delta(1), epsilon(1). CF(0) has three main subunits: a(1), b(2) and c(9-12). The alpha and beta chains form an alternating ring which encloses part of the gamma chain. CF(1) is attached to CF(0) by a central stalk formed by the gamma and epsilon chains, while a peripheral stalk is formed by the delta and b chains.

It is found in the cell inner membrane. It catalyses the reaction ATP + H2O + 4 H(+)(in) = ADP + phosphate + 5 H(+)(out). Its function is as follows. Produces ATP from ADP in the presence of a proton gradient across the membrane. The alpha chain is a regulatory subunit. In Burkholderia mallei (strain NCTC 10229), this protein is ATP synthase subunit alpha.